The chain runs to 342 residues: S-adenosylmethionine:tRNA ribosyltransferase-isomerase (342 aa).

Belongs to the QueA family. In terms of assembly, monomer.

It is found in the cytoplasm. It carries out the reaction 7-aminomethyl-7-carbaguanosine(34) in tRNA + S-adenosyl-L-methionine = epoxyqueuosine(34) in tRNA + adenine + L-methionine + 2 H(+). The protein operates within tRNA modification; tRNA-queuosine biosynthesis. Functionally, transfers and isomerizes the ribose moiety from AdoMet to the 7-aminomethyl group of 7-deazaguanine (preQ1-tRNA) to give epoxyqueuosine (oQ-tRNA). The protein is S-adenosylmethionine:tRNA ribosyltransferase-isomerase of Streptococcus pyogenes serotype M49 (strain NZ131).